We begin with the raw amino-acid sequence, 418 residues long: Serine--tRNA ligase (418 aa).

227–229 lines the L-serine pocket; that stretch reads TSE. ATP contacts are provided by residues 258–260 and V274; that span reads RRE. E281 contributes to the L-serine binding site. 345–348 provides a ligand contact to ATP; sequence ELTS. T380 contacts L-serine.

The protein belongs to the class-II aminoacyl-tRNA synthetase family. Type-1 seryl-tRNA synthetase subfamily. Homodimer. The tRNA molecule binds across the dimer.

The protein resides in the cytoplasm. The catalysed reaction is tRNA(Ser) + L-serine + ATP = L-seryl-tRNA(Ser) + AMP + diphosphate + H(+). The enzyme catalyses tRNA(Sec) + L-serine + ATP = L-seryl-tRNA(Sec) + AMP + diphosphate + H(+). It participates in aminoacyl-tRNA biosynthesis; selenocysteinyl-tRNA(Sec) biosynthesis; L-seryl-tRNA(Sec) from L-serine and tRNA(Sec): step 1/1. In terms of biological role, catalyzes the attachment of serine to tRNA(Ser). Is also able to aminoacylate tRNA(Sec) with serine, to form the misacylated tRNA L-seryl-tRNA(Sec), which will be further converted into selenocysteinyl-tRNA(Sec). The protein is Serine--tRNA ligase of Rhodococcus jostii (strain RHA1).